A 213-amino-acid polypeptide reads, in one-letter code: Glycerol-3-phosphate acyltransferase (213 aa).

The next 6 membrane-spanning stretches (helical) occupy residues 2–22 (ITIVLLILAYLLGSIPSGLWI), 52–74 (AGMATFVIDFFKGTLATLLPIIF), 81–100 (PLIFGLLAVIGHTFPIFAGF), 112–132 (VIFGFAPIFCLYLAIIFFGAL), 143–163 (VTASIAAVIGVLLFPLFGFIL), and 164–184 (SNYDSLFITIILALASLIIIR).

The protein belongs to the PlsY family. In terms of assembly, probably interacts with PlsX.

It localises to the cell membrane. The catalysed reaction is an acyl phosphate + sn-glycerol 3-phosphate = a 1-acyl-sn-glycero-3-phosphate + phosphate. Its pathway is lipid metabolism; phospholipid metabolism. Its function is as follows. Catalyzes the transfer of an acyl group from acyl-phosphate (acyl-PO(4)) to glycerol-3-phosphate (G3P) to form lysophosphatidic acid (LPA). This enzyme utilizes acyl-phosphate as fatty acyl donor, but not acyl-CoA or acyl-ACP. This chain is Glycerol-3-phosphate acyltransferase, found in Streptococcus pneumoniae (strain Hungary19A-6).